Reading from the N-terminus, the 135-residue chain is RxLR effector protein Avh5 (135 aa).

An N-terminal signal peptide occupies residues 1 to 19 (MRLQFFLVMAVATLATISA). The RxLR-dEER signature appears at 43–71 (RFLRTADTDIVYEPKVHNPGKKQVFIEDK). Positions 81, 83, and 84 each coordinate a 1,2-diacyl-sn-glycero-3-phospho-(1D-myo-inositol-3-phosphate).

Belongs to the RxLR effector family.

It localises to the secreted. It is found in the host cell. Its function is as follows. Effector that suppresses plant defense responses during the early stages of pathogen infection. Suppresses cell death induced by effectors and PAMPs in plant hosts. This is RxLR effector protein Avh5 from Phytophthora sojae (Soybean stem and root rot agent).